A 425-amino-acid polypeptide reads, in one-letter code: Imidazolonepropionase (425 aa).

Fe(3+) contacts are provided by histidine 78 and histidine 80. Residues histidine 78 and histidine 80 each contribute to the Zn(2+) site. Positions 87, 150, and 183 each coordinate 4-imidazolone-5-propanoate. N-formimidoyl-L-glutamate is bound at residue tyrosine 150. Histidine 248 provides a ligand contact to Fe(3+). Histidine 248 is a binding site for Zn(2+). Residue glutamine 251 participates in 4-imidazolone-5-propanoate binding. Residue aspartate 323 coordinates Fe(3+). Residue aspartate 323 participates in Zn(2+) binding. The N-formimidoyl-L-glutamate site is built by asparagine 325 and glycine 327. Threonine 328 is a binding site for 4-imidazolone-5-propanoate.

Belongs to the metallo-dependent hydrolases superfamily. HutI family. It depends on Zn(2+) as a cofactor. Requires Fe(3+) as cofactor.

The protein resides in the cytoplasm. It carries out the reaction 4-imidazolone-5-propanoate + H2O = N-formimidoyl-L-glutamate. The protein operates within amino-acid degradation; L-histidine degradation into L-glutamate; N-formimidoyl-L-glutamate from L-histidine: step 3/3. Catalyzes the hydrolytic cleavage of the carbon-nitrogen bond in imidazolone-5-propanoate to yield N-formimidoyl-L-glutamate. It is the third step in the universal histidine degradation pathway. The protein is Imidazolonepropionase of Polaromonas sp. (strain JS666 / ATCC BAA-500).